Here is a 325-residue protein sequence, read N- to C-terminus: Elongation factor P--(R)-beta-lysine ligase (325 aa).

Substrate is bound at residue 76–78 (SPE). Residues 100–102 (RNE) and N109 contribute to the ATP site. Residue Y118 coordinates substrate. Residue 244–245 (EL) participates in ATP binding. E251 provides a ligand contact to substrate. G300 is an ATP binding site.

This sequence belongs to the class-II aminoacyl-tRNA synthetase family. EpmA subfamily. In terms of assembly, homodimer.

The enzyme catalyses D-beta-lysine + L-lysyl-[protein] + ATP = N(6)-((3R)-3,6-diaminohexanoyl)-L-lysyl-[protein] + AMP + diphosphate + H(+). Its function is as follows. With EpmB is involved in the beta-lysylation step of the post-translational modification of translation elongation factor P (EF-P) on 'Lys-34'. Catalyzes the ATP-dependent activation of (R)-beta-lysine produced by EpmB, forming a lysyl-adenylate, from which the beta-lysyl moiety is then transferred to the epsilon-amino group of EF-P 'Lys-34'. In Salmonella typhi, this protein is Elongation factor P--(R)-beta-lysine ligase.